Reading from the N-terminus, the 272-residue chain is 3-methyl-2-oxobutanoate hydroxymethyltransferase (272 aa).

Aspartate 52 and aspartate 91 together coordinate Mg(2+). 3-methyl-2-oxobutanoate contacts are provided by residues 52-53 (DS), aspartate 91, and lysine 121. Glutamate 123 contacts Mg(2+). The Proton acceptor role is filled by glutamate 190.

This sequence belongs to the PanB family. In terms of assembly, homodecamer; pentamer of dimers. Mg(2+) is required as a cofactor.

The protein localises to the cytoplasm. The catalysed reaction is 3-methyl-2-oxobutanoate + (6R)-5,10-methylene-5,6,7,8-tetrahydrofolate + H2O = 2-dehydropantoate + (6S)-5,6,7,8-tetrahydrofolate. Its pathway is cofactor biosynthesis; (R)-pantothenate biosynthesis; (R)-pantoate from 3-methyl-2-oxobutanoate: step 1/2. Catalyzes the reversible reaction in which hydroxymethyl group from 5,10-methylenetetrahydrofolate is transferred onto alpha-ketoisovalerate to form ketopantoate. In Cytophaga hutchinsonii (strain ATCC 33406 / DSM 1761 / CIP 103989 / NBRC 15051 / NCIMB 9469 / D465), this protein is 3-methyl-2-oxobutanoate hydroxymethyltransferase.